The following is a 639-amino-acid chain: Homeobox protein 9 (639 aa).

6 disordered regions span residues 1-45, 66-144, 157-179, 262-313, 331-422, and 436-547; these read MLNS…DKQN, SPNH…DDNS, NQNQ…QNQN, PRTL…SSGT, SESS…QTSN, and TNKN…NNEN. A coiled-coil region spans residues 72–109; it reads ANNNNNNNNNNNNNNNNNNNNNNNNNNNNNNNNNNNIQ. Composition is skewed to low complexity over residues 73–119 and 126–142; these read NNNN…SNNN and GSLN…GNDD. Coiled-coil stretches lie at residues 152-184 and 230-296; these read SNQN…KDSW and EIEI…NINE. The span at 266-300 shows a compositional bias: low complexity; sequence NNSSDSISENINNNNNNNNNNNNNNNNNINESNIN. The span at 345–354 shows a compositional bias: basic and acidic residues; that stretch reads QPRKVPRDLN. The span at 358–399 shows a compositional bias: low complexity; the sequence is NNNINYANNNNNNNNNNNNNNHNNNINNNNNNNNNNNNNSNN. Positions 365 to 396 form a coiled coil; it reads NNNNNNNNNNNNNNHNNNINNNNNNNNNNNNN. Residues 405–422 show a composition bias toward polar residues; it reads GSITNSVNIKPSKDQTSN. A compositionally biased stretch (low complexity) spans 436–526; that stretch reads TNKNNNNNNN…NNNLTSSSNN (91 aa). Residues 532–547 show a composition bias toward polar residues; the sequence is GNTSPNQSSANGNNEN. Residues 559–621 constitute a DNA-binding region (homeobox); that stretch reads KRKKRGKLPG…NARRRILPRQ (63 aa).

Its subcellular location is the nucleus. Putative transcription factor. This chain is Homeobox protein 9 (hbx9), found in Dictyostelium discoideum (Social amoeba).